A 313-amino-acid chain; its full sequence is Protoheme IX farnesyltransferase (313 aa).

8 consecutive transmembrane segments (helical) span residues 23–43 (ILAYIALTKPRVIELLLVTTI), 56–76 (PLLILNTLLGGVMAAASANTL), 107–127 (LIFGVVLGVGAFAWLWWTANL), 128–148 (LSGLLAVATIAFYVFVYTLVL), 155–175 (NVVWGGAAGCMPVMIGWSAVT), 182–202 (ALVMFAVIFFWTPPHTWALAM), 243–263 (LALAAGVIYAVVAFLAGVWFL), and 291–311 (YLAVVFCALAVDSVVGWPTLF).

It belongs to the UbiA prenyltransferase family. Protoheme IX farnesyltransferase subfamily.

It is found in the cell membrane. It carries out the reaction heme b + (2E,6E)-farnesyl diphosphate + H2O = Fe(II)-heme o + diphosphate. The protein operates within porphyrin-containing compound metabolism; heme O biosynthesis; heme O from protoheme: step 1/1. Its function is as follows. Converts heme B (protoheme IX) to heme O by substitution of the vinyl group on carbon 2 of heme B porphyrin ring with a hydroxyethyl farnesyl side group. The polypeptide is Protoheme IX farnesyltransferase (Mycobacteroides abscessus (strain ATCC 19977 / DSM 44196 / CCUG 20993 / CIP 104536 / JCM 13569 / NCTC 13031 / TMC 1543 / L948) (Mycobacterium abscessus)).